Here is a 384-residue protein sequence, read N- to C-terminus: S-adenosylmethionine synthase (384 aa).

ATP is bound at residue histidine 15. Aspartate 17 serves as a coordination point for Mg(2+). Glutamate 43 lines the K(+) pocket. Positions 56 and 99 each coordinate L-methionine. Residues 99–109 (QSPDINQGVDK) are flexible loop. Residues 164–166 (DAK), 230–231 (RF), aspartate 239, 245–246 (RK), alanine 262, and lysine 266 each bind ATP. Aspartate 239 serves as a coordination point for L-methionine. Position 270 (lysine 270) interacts with L-methionine.

It belongs to the AdoMet synthase family. As to quaternary structure, homotetramer; dimer of dimers. Requires Mg(2+) as cofactor. K(+) serves as cofactor.

The protein resides in the cytoplasm. It carries out the reaction L-methionine + ATP + H2O = S-adenosyl-L-methionine + phosphate + diphosphate. Its pathway is amino-acid biosynthesis; S-adenosyl-L-methionine biosynthesis; S-adenosyl-L-methionine from L-methionine: step 1/1. In terms of biological role, catalyzes the formation of S-adenosylmethionine (AdoMet) from methionine and ATP. The overall synthetic reaction is composed of two sequential steps, AdoMet formation and the subsequent tripolyphosphate hydrolysis which occurs prior to release of AdoMet from the enzyme. This Aliivibrio salmonicida (strain LFI1238) (Vibrio salmonicida (strain LFI1238)) protein is S-adenosylmethionine synthase.